A 756-amino-acid chain; its full sequence is Alpha-1,2-mannosyltransferase MNN26 (756 aa).

Residues 1–10 (MSLRRLSPSH) are Cytoplasmic-facing. A helical transmembrane segment spans residues 11–31 (LILGTLVLGVIIFNLYVLTST). Residues 32-756 (HEDIKKVKGP…NGKNKQGAAS (725 aa)) lie on the Extracellular side of the membrane. Positions 723–734 (LGEKSQPKQPEI) are enriched in polar residues. The interval 723 to 756 (LGEKSQPKQPEINNNNNNNNNDDDNGKNKQGAAS) is disordered.

This sequence belongs to the MNN1/MNT family.

The protein localises to the golgi apparatus membrane. Its pathway is protein modification; protein glycosylation. Alpha-1,2-mannosyltransferase required for cell wall integrity. Responsible for addition of the first alpha-1,2-linked mannose to form the branches on the mannan backbone of oligosaccharides. Addition of alpha-1,2-mannose is required for stabilization of the alpha-1,6-mannose backbone and hence regulates mannan fibril length; and is important for both immune recognition and virulence. This chain is Alpha-1,2-mannosyltransferase MNN26 (MNN26), found in Candida albicans (strain SC5314 / ATCC MYA-2876) (Yeast).